The primary structure comprises 120 residues: Large ribosomal subunit protein eL8 (120 aa).

Belongs to the eukaryotic ribosomal protein eL8 family. As to quaternary structure, part of the 50S ribosomal subunit. Probably part of the RNase P complex.

The protein resides in the cytoplasm. In terms of biological role, multifunctional RNA-binding protein that recognizes the K-turn motif in ribosomal RNA, the RNA component of RNase P, box H/ACA, box C/D and box C'/D' sRNAs. The protein is Large ribosomal subunit protein eL8 of Haloquadratum walsbyi (strain DSM 16790 / HBSQ001).